We begin with the raw amino-acid sequence, 29 residues long: GFPTCGETCTLGTCNTPGCTCSWPICTRD.

A cross-link (cyclopeptide (Gly-Asp)) is located at residues 1–29 (GFPTCGETCTLGTCNTPGCTCSWPICTRD). 3 disulfides stabilise this stretch: Cys-5–Cys-19, Cys-9–Cys-21, and Cys-14–Cys-26.

Belongs to the cyclotide family. Moebius subfamily. In terms of processing, this is a cyclic peptide.

Functionally, probably participates in a plant defense mechanism. The sequence is that of Cyclotide mang-A from Melicytus angustifolius (Hymenanthera angustifolia).